We begin with the raw amino-acid sequence, 261 residues long: Mediator of RNA polymerase II transcription subunit 7 (261 aa).

2 disordered regions span residues 1–55 and 224–250; these read MAEA…TPAE and DSAS…ANSS. 2 stretches are compositionally biased toward basic and acidic residues: residues 23–45 and 230–240; these read FTPD…EDGK and GENDTAKRTTG. Residues 241-250 show a composition bias toward polar residues; sequence DQDANNANSS.

It belongs to the Mediator complex subunit 7 family. In terms of assembly, component of the Mediator complex.

The protein localises to the nucleus. Functionally, component of the Mediator complex, a coactivator involved in the regulated transcription of nearly all RNA polymerase II-dependent genes. Mediator functions as a bridge to convey information from gene-specific regulatory proteins to the basal RNA polymerase II transcription machinery. Mediator is recruited to promoters by direct interactions with regulatory proteins and serves as a scaffold for the assembly of a functional preinitiation complex with RNA polymerase II and the general transcription factors. The protein is Mediator of RNA polymerase II transcription subunit 7 (med7) of Neosartorya fischeri (strain ATCC 1020 / DSM 3700 / CBS 544.65 / FGSC A1164 / JCM 1740 / NRRL 181 / WB 181) (Aspergillus fischerianus).